The chain runs to 89 residues: Long neurotoxin homolog TA-bm16 (89 aa).

The signal sequence occupies residues 1–21 (MKTLLLTLVVVTIVCLDLGYT). Disulfide bonds link C24–C45, C27–C32, C38–C66, C70–C81, and C82–C87.

The protein belongs to the three-finger toxin family. Ancestral subfamily. Orphan group V sub-subfamily. As to expression, expressed by the venom gland.

Its subcellular location is the secreted. Its function is as follows. Exhibits M2 muscarinic acetylcholine receptor (CHRM2)-blocking activity, but has a weak binding activity toward nicotinic AChR. Moreover, it inhibits collagen-induced platelet aggregation. The sequence is that of Long neurotoxin homolog TA-bm16 from Bungarus multicinctus (Many-banded krait).